A 97-amino-acid chain; its full sequence is YcgL domain-containing protein PSEEN4034 (97 aa).

Residues 3-87 (RICSIYKSPR…PDDDYIEHLP (85 aa)) enclose the YcgL domain.

In Pseudomonas entomophila (strain L48), this protein is YcgL domain-containing protein PSEEN4034.